Here is a 146-residue protein sequence, read N- to C-terminus: Snaclec coagulation factor IX/factor X-binding protein subunit B (146 aa).

Positions 1–23 are cleaved as a signal peptide; the sequence is MGRFIFLSFGLLVVFLSLSGTGA. 3 disulfides stabilise this stretch: C25–C36, C53–C142, and C119–C134. The C-type lectin domain maps to 32–143; it reads YEGHCYKPFN…CRMEAYFVCE (112 aa). Ca(2+) is bound by residues S64 and E70. E143 contacts Ca(2+).

This sequence belongs to the snaclec family. As to quaternary structure, heterodimer with subunit A of IX/X-bp or IX-bp; disulfide-linked. As to expression, expressed by the venom gland.

The protein resides in the secreted. In terms of biological role, when linked to subunit A of IX/X-bp, anticoagulant protein which binds to the gamma-carboxyglutamic acid-domain regions of factors IX (F9) and factor X (F10) in the presence of calcium with a 1 to 1 stoichiometry. Its function is as follows. When linked to subunit A of IX-bp, anticoagulant protein which binds to the gamma-carboxyglutamic acid-domain regions of factor IX (but not to factor X) in the presence of calcium with a 1 to 1 stoichiometry. The protein is Snaclec coagulation factor IX/factor X-binding protein subunit B of Gloydius halys (Chinese water mocassin).